A 520-amino-acid chain; its full sequence is 2-isopropylmalate synthase (520 aa).

The 263-residue stretch at 12 to 274 folds into the Pyruvate carboxyltransferase domain; sequence IRIFDTTLRD…DSAINTPRIV (263 aa). Mn(2+)-binding residues include D21, H209, H211, and N245. The segment at 396–520 is regulatory domain; sequence RLASMTISDV…VIAGKTAAVA (125 aa).

The protein belongs to the alpha-IPM synthase/homocitrate synthase family. LeuA type 1 subfamily. In terms of assembly, homodimer. Requires Mn(2+) as cofactor.

It localises to the cytoplasm. The enzyme catalyses 3-methyl-2-oxobutanoate + acetyl-CoA + H2O = (2S)-2-isopropylmalate + CoA + H(+). Its pathway is amino-acid biosynthesis; L-leucine biosynthesis; L-leucine from 3-methyl-2-oxobutanoate: step 1/4. Functionally, catalyzes the condensation of the acetyl group of acetyl-CoA with 3-methyl-2-oxobutanoate (2-ketoisovalerate) to form 3-carboxy-3-hydroxy-4-methylpentanoate (2-isopropylmalate). This is 2-isopropylmalate synthase from Xanthomonas oryzae pv. oryzae (strain KACC10331 / KXO85).